Reading from the N-terminus, the 214-residue chain is Thioredoxin-like 4, chloroplastic (214 aa).

A compositionally biased stretch (low complexity) spans 1–20 (MITASLLPLPATSSSSGRRS). The disordered stretch occupies residues 1–68 (MITASLLPLP…STNGSLPGLP (68 aa)). The transit peptide at 1-71 (MITASLLPLP…GSLPGLPPVV (71 aa)) directs the protein to the chloroplast. A compositionally biased stretch (pro residues) spans 21-34 (LPPPTTTFPRPPPP). The segment covering 42-53 (SSSSSSASSTES) has biased composition (low complexity). Residues 72–199 (VEEEEEEFCP…IIAAIQKYTA (128 aa)) enclose the Thioredoxin domain. Catalysis depends on nucleophile residues Cys-117 and Cys-120. Cys-117 and Cys-120 form a disulfide bridge.

The protein belongs to the thioredoxin family.

It localises to the plastid. The protein resides in the chloroplast. Functionally, probable thiol-disulfide oxidoreductase that may participate in various redox reactions. The protein is Thioredoxin-like 4, chloroplastic of Oryza sativa subsp. japonica (Rice).